We begin with the raw amino-acid sequence, 140 residues long: Large ribosomal subunit protein uL14 (140 aa).

At Ser17 the chain carries Phosphoserine. Phosphotyrosine is present on Tyr38.

It belongs to the universal ribosomal protein uL14 family. Component of the large ribosomal subunit.

It localises to the cytoplasm. Its function is as follows. Component of the large ribosomal subunit. The ribosome is a large ribonucleoprotein complex responsible for the synthesis of proteins in the cell. This chain is Large ribosomal subunit protein uL14 (RPL23), found in Canis lupus familiaris (Dog).